The chain runs to 138 residues: Gastrula zinc finger protein XlCGF44.2 (138 aa).

C2H2-type zinc fingers lie at residues 5 to 27, 32 to 54, 60 to 82, 88 to 110, and 116 to 138; these read FACTKCKRRFCSNKELFSHKRIH, FVCAVCGKYFSDRIILQAHQRLH, FTCTQCHKSFLYKRNLHQHQQIH, YVCSTCGKQLKSKLTLNQHMKTH, and FACSECSKSFRFKAHLHRHQESH.

The protein belongs to the krueppel C2H2-type zinc-finger protein family.

It is found in the nucleus. Its function is as follows. May be involved in transcriptional regulation. The chain is Gastrula zinc finger protein XlCGF44.2 from Xenopus laevis (African clawed frog).